Consider the following 682-residue polypeptide: Cyclic nucleotide-gated cation channel (682 aa).

The segment at 1-41 (MTGQAALERSVSSHRLSVRSRLEGEAERAESAISRTDGDDD) is disordered. Topologically, residues 1 to 136 (MTGQAALERS…EGFVVSQSDD (136 aa)) are cytoplasmic. Basic and acidic residues predominate over residues 20–30 (SRLEGEAERAE). The helical transmembrane segment at 137–157 (IYYYWLFFIALASLYNWIMLV) threads the bilayer. The Extracellular portion of the chain corresponds to 158-169 (ARACFDQLQDEN). The helical transmembrane segment at 170-190 (FFLWVGLDYLCDVIYILDTCI) threads the bilayer. Residues 191 to 218 (RLRTGYLEQGLLVKDLAKLRDNYIRTLQ) are Cytoplasmic-facing. A helical membrane pass occupies residues 219 to 239 (FKLDFLSILPTELLFFVTGYV). The Extracellular portion of the chain corresponds to 240–272 (PQLRFNRLLRFSRMFEFFDRTETRTNYPNAFRI). A helical transmembrane segment spans residues 273–293 (CNLILYILVIIHWNACIYYAI). Topologically, residues 294 to 311 (SKALGLSSDTWVYSGQNK) are cytoplasmic. The chain crosses the membrane as a helical span at residues 312–332 (TLSFCYVYCFYWSTLTLTTIG). Over 333–343 (EMPPPVKDEEY) the chain is Extracellular. A helical transmembrane segment spans residues 344-364 (VFVVFDFLVGVLIFATIVGNV). At 365-682 (GSMIANMNAT…SAETNSEEET (318 aa)) the chain is on the cytoplasmic side. Residues 455-577 (LLVE…QGLL), Glu-514, and Arg-529 contribute to the 3',5'-cyclic AMP site. The disordered stretch occupies residues 649–682 (GEHAGVPTHTHADIHAQPETHTRTSAETNSEEET). A compositionally biased stretch (basic and acidic residues) spans 658-672 (THADIHAQPETHTRT).

This sequence belongs to the cyclic nucleotide-gated cation channel (TC 1.A.1.5) family. As to expression, olfactory neurons.

The protein resides in the membrane. Its function is as follows. This cyclic nucleotide-gated channel is activated equally well by both cAMP and cGMP. The protein is Cyclic nucleotide-gated cation channel of Ictalurus punctatus (Channel catfish).